The primary structure comprises 142 residues: uncharacterized protein (142 aa).

Residues 18 to 137 (QSSGYSCGPA…KIFTGNVLVV (120 aa)) enclose the Peptidase C39 domain.

This is an uncharacterized protein from Methanothermobacter marburgensis (strain ATCC BAA-927 / DSM 2133 / JCM 14651 / NBRC 100331 / OCM 82 / Marburg) (Methanobacterium thermoautotrophicum).